The following is a 403-amino-acid chain: Ribosomal RNA large subunit methyltransferase I (403 aa).

The PUA domain maps to 9 to 88; that stretch reads YPRLVLSKGR…ESIDIAFFTR (80 aa).

It belongs to the methyltransferase superfamily. RlmI family.

It localises to the cytoplasm. The catalysed reaction is cytidine(1962) in 23S rRNA + S-adenosyl-L-methionine = 5-methylcytidine(1962) in 23S rRNA + S-adenosyl-L-homocysteine + H(+). Functionally, specifically methylates the cytosine at position 1962 (m5C1962) of 23S rRNA. The polypeptide is Ribosomal RNA large subunit methyltransferase I (Salmonella schwarzengrund (strain CVM19633)).